Reading from the N-terminus, the 325-residue chain is tRNA(Ile)-lysidine synthase (325 aa).

34–39 (SGGADS) is an ATP binding site.

Belongs to the tRNA(Ile)-lysidine synthase family.

Its subcellular location is the cytoplasm. The catalysed reaction is cytidine(34) in tRNA(Ile2) + L-lysine + ATP = lysidine(34) in tRNA(Ile2) + AMP + diphosphate + H(+). Ligates lysine onto the cytidine present at position 34 of the AUA codon-specific tRNA(Ile) that contains the anticodon CAU, in an ATP-dependent manner. Cytidine is converted to lysidine, thus changing the amino acid specificity of the tRNA from methionine to isoleucine. This is tRNA(Ile)-lysidine synthase from Rhodococcus jostii (strain RHA1).